We begin with the raw amino-acid sequence, 205 residues long: Small ribosomal subunit protein uS3 (205 aa).

Residues valine 12 to arginine 80 form the KH type-2 domain.

Belongs to the universal ribosomal protein uS3 family. In terms of assembly, part of the 30S ribosomal subunit. Forms a tight complex with proteins S10 and S14.

In terms of biological role, binds the lower part of the 30S subunit head. Binds mRNA in the 70S ribosome, positioning it for translation. This Buchnera aphidicola subsp. Acyrthosiphon kondoi (Acyrthosiphon kondoi symbiotic bacterium) protein is Small ribosomal subunit protein uS3.